We begin with the raw amino-acid sequence, 409 residues long: S-adenosylmethionine synthase (409 aa).

Residue Gly-141–Asp-146 coordinates ATP.

Belongs to the AdoMet synthase 2 family. Mg(2+) is required as a cofactor.

The catalysed reaction is L-methionine + ATP + H2O = S-adenosyl-L-methionine + phosphate + diphosphate. The protein operates within amino-acid biosynthesis; S-adenosyl-L-methionine biosynthesis; S-adenosyl-L-methionine from L-methionine: step 1/1. In terms of biological role, catalyzes the formation of S-adenosylmethionine from methionine and ATP. This Hyperthermus butylicus (strain DSM 5456 / JCM 9403 / PLM1-5) protein is S-adenosylmethionine synthase.